Consider the following 581-residue polypeptide: ATP-dependent lipid A-core flippase (581 aa).

Transmembrane regions (helical) follow at residues 15–35 (LWPI…ALIL), 68–88 (LIVI…SYCI), 152–172 (IIGL…ILIV), 252–272 (PIIQ…ASFP), and 274–294 (IMET…IALM). Positions 27-309 (IVAAVALILN…LTNVNAQFQR (283 aa)) constitute an ABC transmembrane type-1 domain. The ABC transporter domain occupies 341–577 (IEFRNVTFCY…NGVYSQLHRM (237 aa)). An ATP-binding site is contributed by 375–382 (GRSGSGKS).

It belongs to the ABC transporter superfamily. Lipid exporter (TC 3.A.1.106) family. As to quaternary structure, homodimer.

It localises to the cell inner membrane. It carries out the reaction ATP + H2O + lipid A-core oligosaccharideSide 1 = ADP + phosphate + lipid A-core oligosaccharideSide 2.. In terms of biological role, involved in lipopolysaccharide (LPS) biosynthesis. Translocates lipid A-core from the inner to the outer leaflet of the inner membrane. Transmembrane domains (TMD) form a pore in the inner membrane and the ATP-binding domain (NBD) is responsible for energy generation. This is ATP-dependent lipid A-core flippase from Photorhabdus laumondii subsp. laumondii (strain DSM 15139 / CIP 105565 / TT01) (Photorhabdus luminescens subsp. laumondii).